A 1285-amino-acid polypeptide reads, in one-letter code: DNA polymerase II large subunit (1285 aa).

Residues 565–586 (TRIGGRMGRPGKSKPREMRPPP) are disordered.

It belongs to the archaeal DNA polymerase II family. In terms of assembly, heterodimer of a large subunit and a small subunit. Post-translationally, this protein undergoes a protein self splicing that involves a post-translational excision of the intervening region (intein) followed by peptide ligation.

The catalysed reaction is DNA(n) + a 2'-deoxyribonucleoside 5'-triphosphate = DNA(n+1) + diphosphate. It carries out the reaction Exonucleolytic cleavage in the 3'- to 5'-direction to yield nucleoside 5'-phosphates.. In terms of biological role, possesses two activities: a DNA synthesis (polymerase) and an exonucleolytic activity that degrades single-stranded DNA in the 3'- to 5'-direction. Has a template-primer preference which is characteristic of a replicative DNA polymerase. The sequence is that of DNA polymerase II large subunit from Methanoculleus marisnigri (strain ATCC 35101 / DSM 1498 / JR1).